The following is a 199-amino-acid chain: MAKVLVLYYSMYGHIETMANTVAEGARGVDGADVVVKRVPETMADEAFLNAGGKADQGAPVADPKELADYDAIIFGTPTRFGNMAGQMRTFLDQTGGLWAEGKLHGKVGSVFTSTGTGGGQEQTITSFWTTLAHHGMVLVPLGYGIPEFFDISEVNGGTPYGASTIAGGDGSRQPSEKELAIARFQGKHVAELAIKLHG.

Residues 4–190 (VLVLYYSMYG…AIARFQGKHV (187 aa)) form the Flavodoxin-like domain. Residues 10–15 (SMYGHI) and 79–81 (TRF) each bind FMN. Tyrosine 12 is a binding site for NAD(+). Tryptophan 99 contributes to the substrate binding site. Residues 114–119 (STGTGG) and histidine 134 each bind FMN.

This sequence belongs to the WrbA family. Requires FMN as cofactor.

The enzyme catalyses a quinone + NADH + H(+) = a quinol + NAD(+). The catalysed reaction is a quinone + NADPH + H(+) = a quinol + NADP(+). The protein is NAD(P)H dehydrogenase (quinone) of Marinobacter nauticus (strain ATCC 700491 / DSM 11845 / VT8) (Marinobacter aquaeolei).